Here is a 357-residue protein sequence, read N- to C-terminus: Heat-inducible transcription repressor HrcA (357 aa).

It belongs to the HrcA family.

In terms of biological role, negative regulator of class I heat shock genes (grpE-dnaK-dnaJ and groELS operons). Prevents heat-shock induction of these operons. In Anabaena sp. (strain L31), this protein is Heat-inducible transcription repressor HrcA.